Consider the following 471-residue polypeptide: 5-hydroxytryptamine receptor 2A (471 aa).

Residues 1 to 80 (MDILCEENTS…LQEKNWSALL (80 aa)) lie on the Extracellular side of the membrane. 5 N-linked (GlcNAc...) asparagine glycosylation sites follow: Asn8, Asn38, Asn44, Asn51, and Asn54. A helical transmembrane segment spans residues 81-97 (TAVVIILTIAGNILVIM). Topologically, residues 98-111 (AVSLEKKLQNATNY) are cytoplasmic. Residues 112–137 (FLMSLAIADMLLGFLVMPVSMLTILY) form a helical membrane-spanning segment. At 138-146 (GYRWPLPSK) the chain is on the extracellular side. A helical membrane pass occupies residues 147–171 (LCAVWIYLDVLFSTASIMHLCAISL). Cys148 and Cys227 are disulfide-bonded. A serotonin-binding site is contributed by Asp155. The DRY motif; important for ligand-induced conformation changes motif lies at 172 to 174 (DRY). Topologically, residues 172–191 (DRYVAIQNPIHHSRFNSRTK) are cytoplasmic. Residues 192–215 (AFLKIIAVWTISVGISMPIPVFGL) form a helical membrane-spanning segment. The Extracellular segment spans residues 216-232 (QDDSKVFKEGSCLLADD). Residues 233–258 (NFVLIGSFVSFFIPLTIMVITYFLTI) form a helical membrane-spanning segment. The Cytoplasmic segment spans residues 259-322 (KSLQKEATLC…QSISNEQKAC (64 aa)). Position 280 is a phosphoserine (Ser280). Residues 323-348 (KVLGIVFFLFVVMWCPFFITNIMAVI) traverse the membrane as a helical segment. Residue Asn343 participates in serotonin binding. A disulfide bridge links Cys349 with Cys353. Topologically, residues 349–356 (CKESCNED) are extracellular. A helical transmembrane segment spans residues 357–382 (VIGALLNVFVWIGYLSSAVNPLVYTL). Positions 376 to 380 (NPLVY) match the NPxxY motif; important for ligand-induced conformation changes and signaling motif. Topologically, residues 383–471 (FNKTYRSAFS…DGVNEKVSCV (89 aa)) are cytoplasmic. The interval 450-471 (KQHSEDASKDNSDGVNEKVSCV) is disordered. Residues 451 to 465 (QHSEDASKDNSDGVN) show a composition bias toward basic and acidic residues. A PDZ-binding motif is present at residues 469–471 (SCV).

Belongs to the G-protein coupled receptor 1 family. As to quaternary structure, interacts (via C-terminus) with MPDZ and PATJ. May interact (via C-terminus) with MPP3, PRDX6, DLG4, DLG1, CASK, APBA1 and MAGI2. Interacts with GRM2 and DRD2; this may affect signaling.

Its subcellular location is the cell membrane. It localises to the cell projection. The protein resides in the dendrite. The protein localises to the axon. It is found in the cytoplasmic vesicle. Its subcellular location is the membrane. It localises to the caveola. The protein resides in the presynapse. With respect to regulation, G-protein coupled receptor activity is regulated by lipids: oleamide increases HTR2A-mediated activity. Functionally, G-protein coupled receptor for 5-hydroxytryptamine (serotonin). Also functions as a receptor for various drugs and psychoactive substances, including mescaline, psilocybin, 1-(2,5-dimethoxy-4-iodophenyl)-2-aminopropane (DOI) and lysergic acid diethylamide (LSD). Ligand binding causes a conformation change that triggers signaling via guanine nucleotide-binding proteins (G proteins) and modulates the activity of downstream effectors. HTR2A is coupled to G(q)/G(11) G alpha proteins and activates phospholipase C-beta, releasing diacylglycerol (DAG) and inositol 1,4,5-trisphosphate (IP3) second messengers that modulate the activity of phosphatidylinositol 3-kinase and promote the release of Ca(2+) ions from intracellular stores, respectively. Beta-arrestin family members inhibit signaling via G proteins and mediate activation of alternative signaling pathways. Affects neural activity, perception, cognition and mood. Plays a role in the regulation of behavior, including responses to anxiogenic situations and psychoactive substances. Plays a role in intestinal smooth muscle contraction, and may play a role in arterial vasoconstriction. This Macaca mulatta (Rhesus macaque) protein is 5-hydroxytryptamine receptor 2A (HTR2A).